The sequence spans 393 residues: tRNA(Met) cytidine acetate ligase (393 aa).

The ATP site is built by G81, N142, and R167.

It belongs to the TmcAL family.

It localises to the cytoplasm. It catalyses the reaction cytidine(34) in elongator tRNA(Met) + acetate + ATP = N(4)-acetylcytidine(34) in elongator tRNA(Met) + AMP + diphosphate. Its function is as follows. Catalyzes the formation of N(4)-acetylcytidine (ac(4)C) at the wobble position of elongator tRNA(Met), using acetate and ATP as substrates. First activates an acetate ion to form acetyladenylate (Ac-AMP) and then transfers the acetyl group to tRNA to form ac(4)C34. The protein is tRNA(Met) cytidine acetate ligase of Bacillus cereus (strain ATCC 10987 / NRS 248).